The following is an 891-amino-acid chain: uncharacterized protein (891 aa).

Residues 1-20 form the signal peptide; that stretch reads MKILKSLVLLVLFMAMPAKA. The next 6 helical transmembrane spans lie at 525–545, 568–588, 614–634, 652–672, 685–705, and 776–796; these read VTIFGLMFVTGALKLTAVEVI, TYFFSAFTDGIDFFVTNVVGA, LLFIELLQIHNGLAFIAIITI, VIAFIGVTVMISLAPFFIILM, ISTLLSYVVQPTILLIFFLLI, and FLVLFTTALLFYSYCLMSYSL.

Belongs to the TrbL/VirB6 family.

The protein localises to the cell membrane. This is an uncharacterized protein from Rickettsia conorii (strain ATCC VR-613 / Malish 7).